The chain runs to 152 residues: MIDIPGTPGTLTGLVLRISQCVFAAGSISYMVTSGGFFSFTAFCYLIAAMGLQVIWSFGLAILDTFALVRKKTLLSPVLVSLFVVGDWVTSTLSLAGASSSAGITVLYFGDLGSCSFEAECWKYQLSVALAFLCWITIAVSSLTTLWLLASA.

Topologically, residues 1 to 21 (MIDIPGTPGTLTGLVLRISQC) are cytoplasmic. 2 consecutive transmembrane segments (helical) span residues 22 to 42 (VFAAGSISYMVTSGGFFSFTA) and 43 to 63 (FCYLIAAMGLQVIWSFGLAIL). The Extracellular segment spans residues 64–77 (DTFALVRKKTLLSP). The chain crosses the membrane as a helical span at residues 78 to 98 (VLVSLFVVGDWVTSTLSLAGA). Residues 99–127 (SSSAGITVLYFGDLGSCSFEAECWKYQLS) are Cytoplasmic-facing. Residues 128–148 (VALAFLCWITIAVSSLTTLWL) form a helical membrane-spanning segment. The Extracellular segment spans residues 149–152 (LASA).

It belongs to the Casparian strip membrane proteins (CASP) family. Homodimer and heterodimers. In terms of tissue distribution, expressed in the stele of the root and in leaves.

Its subcellular location is the cell membrane. In Arabidopsis thaliana (Mouse-ear cress), this protein is CASP-like protein 5B3.